The sequence spans 64 residues: Large ribosomal subunit protein bL35 (64 aa).

2 stretches are compositionally biased toward basic residues: residues 1 to 15 (MPKQKSHSGASKRFR) and 23 to 43 (VRQKANRRHLLEHKSSRRTRR). Residues 1–64 (MPKQKSHSGA…AGRIKRLLAR (64 aa)) form a disordered region.

This sequence belongs to the bacterial ribosomal protein bL35 family.

In Frankia alni (strain DSM 45986 / CECT 9034 / ACN14a), this protein is Large ribosomal subunit protein bL35.